The primary structure comprises 389 residues: 8-amino-7-oxononanoate synthase (389 aa).

Arg18 contacts substrate. Residue 104–105 (GY) coordinates pyridoxal 5'-phosphate. His129 contacts substrate. Ser176, His204, and Thr232 together coordinate pyridoxal 5'-phosphate. Lys235 carries the N6-(pyridoxal phosphate)lysine modification. Thr351 is a binding site for substrate.

Belongs to the class-II pyridoxal-phosphate-dependent aminotransferase family. BioF subfamily. Homodimer. The cofactor is pyridoxal 5'-phosphate.

The catalysed reaction is 6-carboxyhexanoyl-[ACP] + L-alanine + H(+) = (8S)-8-amino-7-oxononanoate + holo-[ACP] + CO2. It functions in the pathway cofactor biosynthesis; biotin biosynthesis. In terms of biological role, catalyzes the decarboxylative condensation of pimeloyl-[acyl-carrier protein] and L-alanine to produce 8-amino-7-oxononanoate (AON), [acyl-carrier protein], and carbon dioxide. The polypeptide is 8-amino-7-oxononanoate synthase (Citrifermentans bemidjiense (strain ATCC BAA-1014 / DSM 16622 / JCM 12645 / Bem) (Geobacter bemidjiensis)).